The chain runs to 101 residues: RNA-binding protein Hfq (101 aa).

Positions 9–68 constitute a Sm domain; it reads DPYLNALRRERIPVSIYLVNGIKLQGQIESFDQFIILLKNTVSQMVYKHAISTVVPARSI. A disordered region spans residues 68-91; the sequence is ISHNNNGSSQAQAPQQAVQTTQPV. Residues 77-91 show a composition bias toward low complexity; it reads QAQAPQQAVQTTQPV.

It belongs to the Hfq family. In terms of assembly, homohexamer.

Functionally, RNA chaperone that binds small regulatory RNA (sRNAs) and mRNAs to facilitate mRNA translational regulation in response to envelope stress, environmental stress and changes in metabolite concentrations. Also binds with high specificity to tRNAs. The polypeptide is RNA-binding protein Hfq (Haemophilus ducreyi (strain 35000HP / ATCC 700724)).